The chain runs to 243 residues: Small ribosomal subunit protein uS3 (243 aa).

Residues 39 to 107 (MRKFVMSELK…ETHLNIVEVR (69 aa)) enclose the KH type-2 domain. Residues 214–243 (ASERRAMEGDAQGPASRDRDRDRDRRRDNA) form a disordered region. The segment covering 229-243 (SRDRDRDRDRRRDNA) has biased composition (basic and acidic residues).

It belongs to the universal ribosomal protein uS3 family. Part of the 30S ribosomal subunit. Forms a tight complex with proteins S10 and S14.

Binds the lower part of the 30S subunit head. Binds mRNA in the 70S ribosome, positioning it for translation. This chain is Small ribosomal subunit protein uS3, found in Rhizobium leguminosarum bv. trifolii (strain WSM2304).